The following is a 295-amino-acid chain: Probable CBASS effector molecule IK1_05631 (295 aa).

The next 4 membrane-spanning stretches (helical) occupy residues 26–46 (IFYAVRISISILIPILSISIY), 56–76 (SNTGVWFSVIGSIWLLIAYQI), 167–187 (ILLFTVSVLYLFLTIAFGFFV), and 190–210 (SMQEYIIKILLPSMSILIYGF).

It is found in the cell membrane. Effector protein of a CBASS antiviral system. CBASS (cyclic oligonucleotide-based antiphage signaling system) provides immunity against bacteriophage. The CD-NTase protein synthesizes cyclic nucleotides in response to infection; these serve as specific second messenger signals. The signals activate a diverse range of effectors, leading to bacterial cell death and thus abortive phage infection. A type I-B CBASS system. Its function is as follows. Protects B.subtilis against phage infection. When IK1_05630 and IK1_05631 are introduced in B.subtilis BEST7003 there is 1000-fold protection against phage SBSphiC. Both genes are required for protection. Activation leads to bacterial cell lysis and death, which occurs before the phage has finished its replication cycle, thus protecting non-infected bacteria by aborting the phage infection and preventing its propagation. The polypeptide is Probable CBASS effector molecule IK1_05631 (Bacillus cereus (strain VD146)).